The chain runs to 174 residues: Large ribosomal subunit protein uL10 (174 aa).

The protein belongs to the universal ribosomal protein uL10 family. As to quaternary structure, part of the ribosomal stalk of the 50S ribosomal subunit. The N-terminus interacts with L11 and the large rRNA to form the base of the stalk. The C-terminus forms an elongated spine to which L12 dimers bind in a sequential fashion forming a multimeric L10(L12)X complex.

Its function is as follows. Forms part of the ribosomal stalk, playing a central role in the interaction of the ribosome with GTP-bound translation factors. The sequence is that of Large ribosomal subunit protein uL10 from Coxiella burnetii (strain CbuK_Q154) (Coxiella burnetii (strain Q154)).